The following is a 481-amino-acid chain: Glutamyl-tRNA(Gln) amidotransferase subunit A (481 aa).

Active-site charge relay system residues include Lys76 and Ser151. Ser175 functions as the Acyl-ester intermediate in the catalytic mechanism.

This sequence belongs to the amidase family. GatA subfamily. Heterotrimer of A, B and C subunits.

It carries out the reaction L-glutamyl-tRNA(Gln) + L-glutamine + ATP + H2O = L-glutaminyl-tRNA(Gln) + L-glutamate + ADP + phosphate + H(+). Functionally, allows the formation of correctly charged Gln-tRNA(Gln) through the transamidation of misacylated Glu-tRNA(Gln) in organisms which lack glutaminyl-tRNA synthetase. The reaction takes place in the presence of glutamine and ATP through an activated gamma-phospho-Glu-tRNA(Gln). The sequence is that of Glutamyl-tRNA(Gln) amidotransferase subunit A from Neisseria meningitidis serogroup A / serotype 4A (strain DSM 15465 / Z2491).